Reading from the N-terminus, the 421-residue chain is Histone-lysine N-methyltransferase SUV39H1 (421 aa).

Positions 46 to 104 constitute a Chromo domain; it reads FEVEYLWNYKKVQDQELYLVKWKYYPDSESTWEPRHHLKCNNLLKQFHLDLERELLRRA. One can recognise a Pre-SET domain in the interval 189–249; that stretch reads AGCKCRDCFS…SCPNRVVQKG (61 aa). Zn(2+)-binding residues include C191, C193, C196, C203, C204, C231, C235, C237, and C241. In terms of domain architecture, SET spans 252-375; it reads YKFCIFRTSD…TGEELTFDYN (124 aa). Residues 263 to 265, Y306, and 332 to 333 each bind S-adenosyl-L-methionine; these read RGW and NH. Zn(2+)-binding residues include C335, C409, C411, and C416. The region spanning 405 to 421 is the Post-SET domain; the sequence is VRVECKCGVSSCRKYLF.

The protein belongs to the class V-like SAM-binding methyltransferase superfamily. Histone-lysine methyltransferase family. Suvar3-9 subfamily.

Its subcellular location is the nucleus. The protein localises to the chromosome. The protein resides in the centromere. The catalysed reaction is L-lysyl(9)-[histone H3] + 3 S-adenosyl-L-methionine = N(6),N(6),N(6)-trimethyl-L-lysyl(9)-[histone H3] + 3 S-adenosyl-L-homocysteine + 3 H(+). In terms of biological role, histone methyltransferase that specifically trimethylates 'Lys-9' of histone H3 using monomethylated H3 'Lys-9' as substrate. H3 'Lys-9' trimethylation represents a specific tag for epigenetic transcriptional repression by recruiting HP1 (CBX1, CBX3 and/or CBX5) proteins to methylated histones. Mainly functions in heterochromatin regions, thereby playing a central role in the establishment of constitutive heterochromatin at pericentric and telomere regions. H3 'Lys-9' trimethylation is also required to direct DNA methylation at pericentric repeats. SUV39H1 is targeted to histone H3 via its interaction with RB1 and is involved in many processes. The protein is Histone-lysine N-methyltransferase SUV39H1 (suv39h1) of Xenopus laevis (African clawed frog).